Consider the following 134-residue polypeptide: Putative integral membrane protein YxzK (134 aa).

The next 4 membrane-spanning stretches (helical) occupy residues V3 to I23, I35 to I55, G58 to I78, and L89 to A109.

It localises to the cell membrane. This chain is Putative integral membrane protein YxzK (yxzK), found in Bacillus subtilis (strain 168).